Reading from the N-terminus, the 481-residue chain is Glutamyl-tRNA(Gln) amidotransferase subunit A (481 aa).

Residues lysine 77 and serine 151 each act as charge relay system in the active site. The active-site Acyl-ester intermediate is the serine 175.

The protein belongs to the amidase family. GatA subfamily. Heterotrimer of A, B and C subunits.

The enzyme catalyses L-glutamyl-tRNA(Gln) + L-glutamine + ATP + H2O = L-glutaminyl-tRNA(Gln) + L-glutamate + ADP + phosphate + H(+). Its function is as follows. Allows the formation of correctly charged Gln-tRNA(Gln) through the transamidation of misacylated Glu-tRNA(Gln) in organisms which lack glutaminyl-tRNA synthetase. The reaction takes place in the presence of glutamine and ATP through an activated gamma-phospho-Glu-tRNA(Gln). The chain is Glutamyl-tRNA(Gln) amidotransferase subunit A from Rubrobacter xylanophilus (strain DSM 9941 / JCM 11954 / NBRC 16129 / PRD-1).